Here is a 330-residue protein sequence, read N- to C-terminus: Calponin-3 (330 aa).

N6-acetyllysine is present on Lys23. A Calponin-homology (CH) domain is found at 26–130; sequence QQAEEDLRNW…TLVALAGLAK (105 aa). Lys158 bears the N6-methyllysine mark. Calponin-like repeat units follow at residues 164 to 189, 204 to 229, and 243 to 268; these read IGLQ…RHLY, ISLQ…RDIY, and ISLQ…RQVY. Positions 279–330 are disordered; the sequence is PVIHNGSQGTGTNGSEISDSDYQAEYPDEYHGEYPDEYPREYQYGDDQGIDY. Basic and acidic residues predominate over residues 306–318; the sequence is DEYHGEYPDEYPR.

The protein belongs to the calponin family.

In terms of biological role, thin filament-associated protein that is implicated in the regulation and modulation of smooth muscle contraction. It is capable of binding to actin, calmodulin and tropomyosin. The interaction of calponin with actin inhibits the actomyosin Mg-ATPase activity. This Rattus norvegicus (Rat) protein is Calponin-3 (Cnn3).